The primary structure comprises 215 residues: Lysozyme-like protein 5 (215 aa).

The N-terminal stretch at 1–17 (MKHFFITILLFCSVVSA) is a signal peptide. One can recognise a Ch-type lysozyme domain in the interval 18-215 (ARNGIDINSP…GVSVDMNYIP (198 aa)). Residues D23, D113, and E115 contribute to the active site.

The protein belongs to the glycosyl hydrolase 25 family.

Its function is as follows. Plays a role in resistance to Gram-positive bacteria S.aureus or B.thuringiensis infection. This chain is Lysozyme-like protein 5, found in Caenorhabditis elegans.